The following is a 216-amino-acid chain: U1 small nuclear ribonucleoprotein A (216 aa).

RRM domains are found at residues 7-86 and 142-216; these read QTIY…YSKS and QILF…FAKK. Residues 97–142 are disordered; the sequence is TFKERPKKVKPPKPAPGTDEKKDKKKKPSSAENSNPNAQTEQPPNQ. Polar residues predominate over residues 126–142; the sequence is SAENSNPNAQTEQPPNQ.

The protein belongs to the RRM U1 A/B'' family. As to quaternary structure, belongs to the spliceosome where it is associated with snRNP U1. Interacts with the SMN complex.

The protein localises to the nucleus. Its function is as follows. Binds stem loop II of U1 snRNA. It is the first snRNP to interact with pre-mRNA. This interaction is required for the subsequent binding of U2 snRNP and the U4/U6/U5 tri-snRNP. Plays a role in regulating sex-lethal splicing. This Drosophila melanogaster (Fruit fly) protein is U1 small nuclear ribonucleoprotein A (snf).